The primary structure comprises 482 residues: UDP-glycosyltransferase 1 (482 aa).

Residue asparagine 243 is glycosylated (N-linked (GlcNAc...) asparagine). Residues 450-470 form a helical membrane-spanning segment; the sequence is IYLVYALVLGSAWWIGKTILG.

It belongs to the glycosyltransferase 28 family.

It is found in the membrane. The enzyme catalyses exophillate aglycone + UDP-alpha-D-glucose = exophillate + UDP + H(+). It functions in the pathway secondary metabolite biosynthesis. Functionally, acts as a depside 2-O-glucosyltransferase that catalyzes the first glycosylation step during phaeomoniecin D biosynthesis by producing the intermediate exophillic acid which is further O-galactosylated into phaeomoniecin D by the C-galactosyltransferase OGT2. This chain is UDP-glycosyltransferase 1, found in Phaeomoniella chlamydospora (Phaeoacremonium chlamydosporum).